Reading from the N-terminus, the 222-residue chain is LHFPL tetraspan subfamily member 3 protein (222 aa).

4 helical membrane passes run 22–42, 96–116, 126–146, and 177–197; these read IGVL…VCFI, FFIG…TLFF, ICAW…MIFP, and ILAI…VVLG.

It belongs to the LHFP family. As to expression, brain-specific.

Its subcellular location is the membrane. The chain is LHFPL tetraspan subfamily member 3 protein from Mus musculus (Mouse).